The following is a 92-amino-acid chain: Small ribosomal subunit protein uS19 (92 aa).

The protein belongs to the universal ribosomal protein uS19 family.

Functionally, protein S19 forms a complex with S13 that binds strongly to the 16S ribosomal RNA. The polypeptide is Small ribosomal subunit protein uS19 (Yersinia pestis (strain Pestoides F)).